The primary structure comprises 519 residues: MSDLFEDPAPARNTPEYTVSELSGAVKRVIEGEFGLVRVRGEIGRVSRPASGHLYFDLKDDRAVIAAICWKGQAGRLSVRPEEGMEVVATGRMTTFPGQSKYQIIVEDMAPAGAGALMAMLEKRRAALAAEGLFDAARKRPLPFLPRVIGVVTSPSGAVIRDILHRLRDRFPSHVLIWPVAVQGEKCAPEVAAAIRGFNALPDGGPIPRPDLLIVARGGGSLEDLWGFNEEIVVRAAAESRIPLISAVGHETDTTLIDHAADRRAPTPTAAAEMAVPVRLDLLAGLDGQGARLSRCAAETIRRRDQRLRDLSRALPRLDSLVAGPSQRFDLWSARLSGALGQSVAARRARLEPLGAHLRPRLLADLVARQKDRLADRGRGLETCLGRRSERARDRFEALSGRLAPAFARLVAESERTNRRDAAALGALAARLEAAPEARLLRLADRLEALDRLRQTLGYRETLRRGYAVVRADGEVVTTKTAAERAASLEIEFQDGRLTLGARKPRKGKAEPPAQGSLL.

Belongs to the XseA family. Heterooligomer composed of large and small subunits.

The protein localises to the cytoplasm. It catalyses the reaction Exonucleolytic cleavage in either 5'- to 3'- or 3'- to 5'-direction to yield nucleoside 5'-phosphates.. Its function is as follows. Bidirectionally degrades single-stranded DNA into large acid-insoluble oligonucleotides, which are then degraded further into small acid-soluble oligonucleotides. This Cereibacter sphaeroides (strain ATCC 17025 / ATH 2.4.3) (Rhodobacter sphaeroides) protein is Exodeoxyribonuclease 7 large subunit.